A 432-amino-acid chain; its full sequence is MRLPGWLWLSSAVLAACRAVEEHNLTEGLEDASAQAACPARLEGSGRCEGSQCPFQLTLPTLTIQLPRQLGSMEEVLKEVRTLKEAVDSLKKSCQDCKLQADDHRDPGGNGGNGAETAEDSRVQELESQVNKLSSELKNAKDQIQGLQGRLETLHLVNMNNIENYVDNKVANLTVVVNSLDGKCSKCPSQEHMQSQPVQHLIYKDCSDHYVLGRRSSGAYRVTPDHRNSSFEVYCDMETMGGGWTVLQARLDGSTNFTREWKDYKAGFGNLEREFWLGNDKIHLLTKSKEMILRIDLEDFNGLTLYALYDQFYVANEFLKYRLHIGNYNGTAGDALRFSRHYNHDLRFFTTPDRDNDRYPSGNCGLYYSSGWWFDSCLSANLNGKYYHQKYKGVRNGIFWGTWPGINQAQPGGYKSSFKQAKMMIRPKNFKP.

The signal sequence occupies residues 1–19 (MRLPGWLWLSSAVLAACRA). Asn24 is a glycosylation site (N-linked (GlcNAc...) asparagine). Residues 71-157 (GSMEEVLKEV…QGRLETLHLV (87 aa)) are a coiled coil. A disordered region spans residues 100 to 122 (QADDHRDPGGNGGNGAETAEDSR). N-linked (GlcNAc...) asparagine glycans are attached at residues Asn172, Asn228, Asn256, and Asn329. Residues 197 to 429 (PVQHLIYKDC…QAKMMIRPKN (233 aa)) form the Fibrinogen C-terminal domain. A disulfide bridge links Cys206 with Cys235. Cys364 and Cys377 are joined by a disulfide.

In terms of assembly, homotetramer; disulfide-linked. As to expression, constitutively expressed in cytotoxic T-cells.

The protein resides in the secreted. Converts prothrombin to thrombin. The polypeptide is Fibroleukin (Fgl2) (Mus musculus (Mouse)).